Reading from the N-terminus, the 171-residue chain is 3-hydroxydecanoyl-[acyl-carrier-protein] dehydratase (171 aa).

His-70 is an active-site residue.

The protein belongs to the thioester dehydratase family. FabA subfamily. In terms of assembly, homodimer.

Its subcellular location is the cytoplasm. It catalyses the reaction a (3R)-hydroxyacyl-[ACP] = a (2E)-enoyl-[ACP] + H2O. The enzyme catalyses (3R)-hydroxydecanoyl-[ACP] = (2E)-decenoyl-[ACP] + H2O. It carries out the reaction (2E)-decenoyl-[ACP] = (3Z)-decenoyl-[ACP]. It functions in the pathway lipid metabolism; fatty acid biosynthesis. In terms of biological role, necessary for the introduction of cis unsaturation into fatty acids. Catalyzes the dehydration of (3R)-3-hydroxydecanoyl-ACP to E-(2)-decenoyl-ACP and then its isomerization to Z-(3)-decenoyl-ACP. Can catalyze the dehydratase reaction for beta-hydroxyacyl-ACPs with saturated chain lengths up to 16:0, being most active on intermediate chain length. The sequence is that of 3-hydroxydecanoyl-[acyl-carrier-protein] dehydratase from Shewanella woodyi (strain ATCC 51908 / MS32).